A 524-amino-acid polypeptide reads, in one-letter code: Phenylalanine--tRNA ligase alpha subunit (524 aa).

Positions 362, 441, and 467 each coordinate L-phenylalanine.

This sequence belongs to the class-II aminoacyl-tRNA synthetase family. Phe-tRNA synthetase alpha subunit type 2 subfamily. In terms of assembly, tetramer of two alpha and two beta subunits. Requires Mg(2+) as cofactor.

The protein localises to the cytoplasm. It carries out the reaction tRNA(Phe) + L-phenylalanine + ATP = L-phenylalanyl-tRNA(Phe) + AMP + diphosphate + H(+). The chain is Phenylalanine--tRNA ligase alpha subunit from Methanopyrus kandleri (strain AV19 / DSM 6324 / JCM 9639 / NBRC 100938).